A 310-amino-acid polypeptide reads, in one-letter code: p-hydroxybenzoic acid efflux pump subunit AaeA (310 aa).

The helical transmembrane segment at 12–32 threads the bilayer; the sequence is AITLVLVILAFIAIFRAWVYY.

Belongs to the membrane fusion protein (MFP) (TC 8.A.1) family.

Its subcellular location is the cell inner membrane. Functionally, forms an efflux pump with AaeB. This Salmonella arizonae (strain ATCC BAA-731 / CDC346-86 / RSK2980) protein is p-hydroxybenzoic acid efflux pump subunit AaeA.